The primary structure comprises 557 residues: 2-succinyl-5-enolpyruvyl-6-hydroxy-3-cyclohexene-1-carboxylate synthase (557 aa).

Belongs to the TPP enzyme family. MenD subfamily. Homodimer. Mg(2+) is required as a cofactor. Mn(2+) serves as cofactor. The cofactor is thiamine diphosphate.

The catalysed reaction is isochorismate + 2-oxoglutarate + H(+) = 5-enolpyruvoyl-6-hydroxy-2-succinyl-cyclohex-3-ene-1-carboxylate + CO2. The protein operates within quinol/quinone metabolism; 1,4-dihydroxy-2-naphthoate biosynthesis; 1,4-dihydroxy-2-naphthoate from chorismate: step 2/7. Its pathway is quinol/quinone metabolism; menaquinone biosynthesis. Functionally, catalyzes the thiamine diphosphate-dependent decarboxylation of 2-oxoglutarate and the subsequent addition of the resulting succinic semialdehyde-thiamine pyrophosphate anion to isochorismate to yield 2-succinyl-5-enolpyruvyl-6-hydroxy-3-cyclohexene-1-carboxylate (SEPHCHC). The sequence is that of 2-succinyl-5-enolpyruvyl-6-hydroxy-3-cyclohexene-1-carboxylate synthase from Phocaeicola vulgatus (strain ATCC 8482 / DSM 1447 / JCM 5826 / CCUG 4940 / NBRC 14291 / NCTC 11154) (Bacteroides vulgatus).